The chain runs to 103 residues: N(4)-acetylcytidine amidohydrolase (103 aa).

An ASCH domain is found at 6 to 94 (ITFFQRFQND…IAEIYPNQTQ (89 aa)). The active-site Proton acceptor is Lys-21. Thr-24 (nucleophile) is an active-site residue. Glu-74 (proton donor) is an active-site residue.

Belongs to the N(4)-acetylcytidine amidohydrolase family.

It catalyses the reaction N(4)-acetylcytidine + H2O = cytidine + acetate + H(+). It carries out the reaction N(4)-acetyl-2'-deoxycytidine + H2O = 2'-deoxycytidine + acetate + H(+). The enzyme catalyses N(4)-acetylcytosine + H2O = cytosine + acetate + H(+). Functionally, catalyzes the hydrolysis of N(4)-acetylcytidine (ac4C). The sequence is that of N(4)-acetylcytidine amidohydrolase (yqfB) from Salmonella typhi.